The chain runs to 201 residues: Small ribosomal subunit protein uS5 (201 aa).

Positions 1-28 (MARGEQQRGEGGQRRDRRDRNAPEERVD) are disordered. In terms of domain architecture, S5 DRBM spans 31-94 (IVEKLVHINR…EEAKKTMIRV (64 aa)). The segment at 173–201 (QIAAKRGKKVGDILGRRADGASAPEAIEG) is disordered. A compositionally biased stretch (basic and acidic residues) spans 181–191 (KVGDILGRRAD).

Belongs to the universal ribosomal protein uS5 family. As to quaternary structure, part of the 30S ribosomal subunit. Contacts proteins S4 and S8.

Functionally, with S4 and S12 plays an important role in translational accuracy. In terms of biological role, located at the back of the 30S subunit body where it stabilizes the conformation of the head with respect to the body. The polypeptide is Small ribosomal subunit protein uS5 (Caulobacter vibrioides (strain ATCC 19089 / CIP 103742 / CB 15) (Caulobacter crescentus)).